The chain runs to 466 residues: SVGFKAGVKDYKLTYYTPDYETKDTDILAAFRVTPQPGVPPEEAGAAVAAESSTGTWTTVWTXXXTSLDRYKGRCYHIEPVAGEENQYIAYVAXXLDLFEEGSVTNMFTSIVGNVFGFKALRALRLEDLRIPPDYVKTFQGPPHGIQVERDKLNKYGRPLLGCTIKPKLGLSAKNYGRAVYECLRGGLDFTKDDENVNSQPFMRWRDRFLFCAEAIYKAQAETGEIKGHYLNATAGTCEEMIKRAVFARELGVPIVMHDYLTGGFTANTSLAHYCRDNGLLLHIHRAMHAVIDRQKNHGIHFRVLAKALRMSGGDHIHSGTVVGKLEGEREITLGFVDLLRDDFIEKDRSRGIYFTQDWVSLPGVLPVASGGIHVWHMPALTEIFGDDSVLQFGGGTLGHPWGNAPGXVANRVALEACVQARNEGRDLAREGNEIIRKACKWSPELAAACEVWKEIKFEFEAMDTL.

K5 bears the N6,N6,N6-trimethyllysine mark. Substrate-binding residues include N114 and T164. Residue K166 is the Proton acceptor of the active site. K168 is a substrate binding site. 3 residues coordinate Mg(2+): K192, D194, and E195. The residue at position 192 (K192) is an N6-carboxylysine. Catalysis depends on H285, which acts as the Proton acceptor. Substrate contacts are provided by R286, H318, and S370.

Belongs to the RuBisCO large chain family. Type I subfamily. As to quaternary structure, heterohexadecamer of 8 large chains and 8 small chains; disulfide-linked. The disulfide link is formed within the large subunit homodimers. Mg(2+) serves as cofactor. The disulfide bond which can form in the large chain dimeric partners within the hexadecamer appears to be associated with oxidative stress and protein turnover.

It localises to the plastid. The protein localises to the chloroplast. It carries out the reaction 2 (2R)-3-phosphoglycerate + 2 H(+) = D-ribulose 1,5-bisphosphate + CO2 + H2O. It catalyses the reaction D-ribulose 1,5-bisphosphate + O2 = 2-phosphoglycolate + (2R)-3-phosphoglycerate + 2 H(+). In terms of biological role, ruBisCO catalyzes two reactions: the carboxylation of D-ribulose 1,5-bisphosphate, the primary event in carbon dioxide fixation, as well as the oxidative fragmentation of the pentose substrate in the photorespiration process. Both reactions occur simultaneously and in competition at the same active site. This is Ribulose bisphosphate carboxylase large chain from Averrhoa carambola (Star fruit).